A 688-amino-acid chain; its full sequence is Elongation factor G (688 aa).

Residues 6–280 enclose the tr-type G domain; sequence KLFRNFGIMA…AVVDFLPSPI (275 aa). GTP-binding positions include 15–22, 79–83, and 133–136; these read AHIDAGKT, DTPGH, and NKMD.

It belongs to the TRAFAC class translation factor GTPase superfamily. Classic translation factor GTPase family. EF-G/EF-2 subfamily.

The protein resides in the cytoplasm. Functionally, catalyzes the GTP-dependent ribosomal translocation step during translation elongation. During this step, the ribosome changes from the pre-translocational (PRE) to the post-translocational (POST) state as the newly formed A-site-bound peptidyl-tRNA and P-site-bound deacylated tRNA move to the P and E sites, respectively. Catalyzes the coordinated movement of the two tRNA molecules, the mRNA and conformational changes in the ribosome. In Ureaplasma parvum serovar 3 (strain ATCC 27815 / 27 / NCTC 11736), this protein is Elongation factor G.